The sequence spans 52 residues: Protein RepA (52 aa).

The segment at residues 20 to 40 is a DNA-binding region (H-T-H motif); it reads KLEELAQKYGMTKSGLVNFLV.

This sequence belongs to the transcriptional regulatory CopG/NikR family. As to quaternary structure, homodimer.

Regulates the plasmid copy number. RepA binds to the repAB promoter thus controlling the synthesis of the plasmid replication initiator protein RepB. The polypeptide is Protein RepA (repA) (Lactiplantibacillus plantarum (Lactobacillus plantarum)).